Consider the following 114-residue polypeptide: Non-specific lipid-transfer protein 2 (114 aa).

Residues 1–23 (MEMVNKIACFVLLCMVVVAPHAE) form the signal peptide. 4 cysteine pairs are disulfide-bonded: Cys27/Cys73, Cys37/Cys50, Cys51/Cys96, and Cys71/Cys110.

It belongs to the plant LTP family.

Plant non-specific lipid-transfer proteins transfer phospholipids as well as galactolipids across membranes. May play a role in wax or cutin deposition in the cell walls of expanding epidermal cells and certain secretory tissues. The sequence is that of Non-specific lipid-transfer protein 2 (LTP2) from Solanum pennellii (Tomato).